An 81-amino-acid chain; its full sequence is Ferredoxin (81 aa).

Residues 2–30 (KYTIVDKETCIACGACGAAAPDIYDYDED) enclose the 4Fe-4S ferredoxin-type domain. Residues Cys11, Cys14, Cys17, and Cys61 each contribute to the [4Fe-4S] cluster site.

It depends on [4Fe-4S] cluster as a cofactor.

Functionally, ferredoxins are iron-sulfur proteins that transfer electrons in a wide variety of metabolic reactions. The polypeptide is Ferredoxin (Bacillus thermoproteolyticus).